Reading from the N-terminus, the 259-residue chain is DNA-directed RNA polymerase 30 kDa polypeptide (259 aa).

A TFIIS-type zinc finger spans residues 155–195 (YNTPCPNCKSRNTTPMMIQTRAADEPPLVRHACRDCKQHFK). The Zn(2+) site is built by C159, C162, C187, and C190. The tract at residues 214–259 (ENKEITEILPDNNPSPPESPEPASPIDDGLIRSTFDRNDEPPEDDE) is disordered. Positions 226–236 (NPSPPESPEPA) are enriched in pro residues.

The protein belongs to the poxviridae DNA-directed RNA polymerase 30 kDa subunit family. The DNA-dependent RNA polymerase (vRNAP) consists of eight subunits encoded by early viral genes and termed according to their apparent molecular masses Rpo147, Rpo132, Rpo35, Rpo30, Rpo22, Rpo19, Rpo18, and Rpo7. The same holoenzyme, with the addition of the transcription-specificity factor RAP94, is used for early gene expression.

It is found in the virion. The protein resides in the host cytoplasm. It catalyses the reaction RNA(n) + a ribonucleoside 5'-triphosphate = RNA(n+1) + diphosphate. Its function is as follows. Part of the DNA-dependent RNA polymerase which catalyzes the transcription of viral DNA into RNA using the four ribonucleoside triphosphates as substrates. Responsible for the transcription of early, intermediate and late genes. DNA-dependent RNA polymerase associates with the early transcription factor (ETF), itself composed of OPG118/D6 and OPG134/A8, thereby allowing the early genes transcription. Late transcription, and probably also intermediate transcription, require newly synthesized RNA polymerase. The sequence is that of DNA-directed RNA polymerase 30 kDa polypeptide (OPG066) from Homo sapiens (Human).